A 392-amino-acid polypeptide reads, in one-letter code: MSSKVFLRDKVHVNVGTIGHVDHGKTTLTAAITKILSTKGLAENKSYDQIDKTKEEKERGITINTTHVSYETVKRHYAHVDCPGHADYVKNMITGAAQMDAGILVVSAYHGVMPQTREHVLLAGQVGISKLIVFLNKCDLVKEEEWIHLVEMEVRELLNEYKFDGDKTPFVRGSALKALEGTDVEGINKLLEVLDEYIEDPIRDVEKPFLMPVEGVHTITGRGTVATGRVERGKIKISEEVEIIGLKETKKAIITGLEMFKKELDFAQAGDNVGILLRGITRDQIERGQVLAKPGSLNAYHKFLSQVYILTQQEGGRHTAFFSNYRPQFYFRTTDVTGFIKLKKDVKMVLPGDRTELIVELNHPIAIEAGTKFSIREGGRTIGAGTVTEIIE.

Positions 10 to 202 (KVHVNVGTIG…VLDEYIEDPI (193 aa)) constitute a tr-type G domain. The segment at 19 to 26 (GHVDHGKT) is G1. 19–26 (GHVDHGKT) serves as a coordination point for GTP. Threonine 26 contacts Mg(2+). The tract at residues 60-64 (GITIN) is G2. Residues 81–84 (DCPG) form a G3 region. GTP contacts are provided by residues 81 to 85 (DCPGH) and 136 to 139 (NKCD). Residues 136-139 (NKCD) are G4. The segment at 174–176 (SAL) is G5.

The protein belongs to the TRAFAC class translation factor GTPase superfamily. Classic translation factor GTPase family. EF-Tu/EF-1A subfamily. As to quaternary structure, monomer.

It is found in the cytoplasm. It catalyses the reaction GTP + H2O = GDP + phosphate + H(+). Functionally, GTP hydrolase that promotes the GTP-dependent binding of aminoacyl-tRNA to the A-site of ribosomes during protein biosynthesis. This chain is Elongation factor Tu, found in Apple proliferation phytoplasma.